A 21-amino-acid chain; its full sequence is Bombinin-H4 (21 aa).

Ile2 carries the post-translational modification D-allo-isoleucine. Ile20 carries the post-translational modification Isoleucine amide.

Belongs to the bombinin family. Expressed by the skin glands.

The protein localises to the secreted. Functionally, has antimicrobial and hemolytic activities. The sequence is that of Bombinin-H4 from Bombina variegata (Yellow-bellied toad).